Reading from the N-terminus, the 384-residue chain is MRIFISTGEVSGDLQGAMLIEALKRQAALKAMDLEIVALGGDRMAETGVSLLGKTPKIASIGLIEALPFIMPTWKLQRKAKQYLQENPPDLLILIDYCGPNVAIGKYARKNIPQVPILYYIAPQAWVWTTNKKTTQDLVNITDHLLAIFSEEARYFAQKGMSVSWVGHPILDRMAQAPTREEARQKLGIKPDQTAIALLPVSRKQELKYLLPVVCQAAQQIQEKLPDVQFLIPLALEDYRSTISAMMEEYGLQGTILDGKSLDALAAADLAIAKSGTVNLELALLNVPQVVVYRLTPLTLWIAQNILKFSVPFLSPVNLVVMEEVVPELFQERATPEQIVQESLDLLLNPQRRQKTLSDYQRVREELGEVGVCDRAAQEILDYV.

This sequence belongs to the LpxB family.

The catalysed reaction is a lipid X + a UDP-2-N,3-O-bis[(3R)-3-hydroxyacyl]-alpha-D-glucosamine = a lipid A disaccharide + UDP + H(+). The protein operates within bacterial outer membrane biogenesis; LPS lipid A biosynthesis. Condensation of UDP-2,3-diacylglucosamine and 2,3-diacylglucosamine-1-phosphate to form lipid A disaccharide, a precursor of lipid A, a phosphorylated glycolipid that anchors the lipopolysaccharide to the outer membrane of the cell. This Gloeothece citriformis (strain PCC 7424) (Cyanothece sp. (strain PCC 7424)) protein is Lipid-A-disaccharide synthase.